The primary structure comprises 102 residues: Small ribosomal subunit protein uS10 (102 aa).

It belongs to the universal ribosomal protein uS10 family. As to quaternary structure, part of the 30S ribosomal subunit.

In terms of biological role, involved in the binding of tRNA to the ribosomes. In Streptococcus equi subsp. zooepidemicus (strain MGCS10565), this protein is Small ribosomal subunit protein uS10.